Consider the following 691-residue polypeptide: Elongation factor G (691 aa).

The region spanning 8 to 283 (KKVRNIGIAA…AVVAYLPAPD (276 aa)) is the tr-type G domain. GTP-binding positions include 17-24 (AHIDAGKT), 81-85 (DTPGH), and 135-138 (NKMD).

This sequence belongs to the TRAFAC class translation factor GTPase superfamily. Classic translation factor GTPase family. EF-G/EF-2 subfamily.

The protein resides in the cytoplasm. In terms of biological role, catalyzes the GTP-dependent ribosomal translocation step during translation elongation. During this step, the ribosome changes from the pre-translocational (PRE) to the post-translocational (POST) state as the newly formed A-site-bound peptidyl-tRNA and P-site-bound deacylated tRNA move to the P and E sites, respectively. Catalyzes the coordinated movement of the two tRNA molecules, the mRNA and conformational changes in the ribosome. This is Elongation factor G from Campylobacter jejuni subsp. doylei (strain ATCC BAA-1458 / RM4099 / 269.97).